The sequence spans 227 residues: Cytochrome c oxidase subunit 2 (227 aa).

Residues 1 to 14 lie on the Mitochondrial intermembrane side of the membrane; sequence MAYPFQLGLQDATS. Residues 15–45 traverse the membrane as a helical segment; the sequence is PIMEELLHFHDHTLMIVFLISSLVLYIISLM. The Mitochondrial matrix portion of the chain corresponds to 46–59; it reads LTTKLTHTSTMDAQ. The helical transmembrane segment at 60–87 threads the bilayer; it reads EVETVWTILPAIILILIALPSLRILYMM. The Mitochondrial intermembrane portion of the chain corresponds to 88–227; sequence DEINNPSLTV…YFETWSALMV (140 aa). Cu cation is bound by residues His-161, Cys-196, Glu-198, Cys-200, His-204, and Met-207. A Mg(2+)-binding site is contributed by Glu-198. Tyr-218 carries the post-translational modification Phosphotyrosine.

The protein belongs to the cytochrome c oxidase subunit 2 family. Component of the cytochrome c oxidase (complex IV, CIV), a multisubunit enzyme composed of 14 subunits. The complex is composed of a catalytic core of 3 subunits MT-CO1, MT-CO2 and MT-CO3, encoded in the mitochondrial DNA, and 11 supernumerary subunits COX4I, COX5A, COX5B, COX6A, COX6B, COX6C, COX7A, COX7B, COX7C, COX8 and NDUFA4, which are encoded in the nuclear genome. The complex exists as a monomer or a dimer and forms supercomplexes (SCs) in the inner mitochondrial membrane with NADH-ubiquinone oxidoreductase (complex I, CI) and ubiquinol-cytochrome c oxidoreductase (cytochrome b-c1 complex, complex III, CIII), resulting in different assemblies (supercomplex SCI(1)III(2)IV(1) and megacomplex MCI(2)III(2)IV(2)). Found in a complex with TMEM177, COA6, COX18, COX20, SCO1 and SCO2. Interacts with TMEM177 in a COX20-dependent manner. Interacts with COX20. Interacts with COX16. Cu cation is required as a cofactor.

It is found in the mitochondrion inner membrane. It catalyses the reaction 4 Fe(II)-[cytochrome c] + O2 + 8 H(+)(in) = 4 Fe(III)-[cytochrome c] + 2 H2O + 4 H(+)(out). Component of the cytochrome c oxidase, the last enzyme in the mitochondrial electron transport chain which drives oxidative phosphorylation. The respiratory chain contains 3 multisubunit complexes succinate dehydrogenase (complex II, CII), ubiquinol-cytochrome c oxidoreductase (cytochrome b-c1 complex, complex III, CIII) and cytochrome c oxidase (complex IV, CIV), that cooperate to transfer electrons derived from NADH and succinate to molecular oxygen, creating an electrochemical gradient over the inner membrane that drives transmembrane transport and the ATP synthase. Cytochrome c oxidase is the component of the respiratory chain that catalyzes the reduction of oxygen to water. Electrons originating from reduced cytochrome c in the intermembrane space (IMS) are transferred via the dinuclear copper A center (CU(A)) of subunit 2 and heme A of subunit 1 to the active site in subunit 1, a binuclear center (BNC) formed by heme A3 and copper B (CU(B)). The BNC reduces molecular oxygen to 2 water molecules using 4 electrons from cytochrome c in the IMS and 4 protons from the mitochondrial matrix. This Canis mesomelas elongae (Eastern African black-backed jackal) protein is Cytochrome c oxidase subunit 2 (MT-CO2).